The primary structure comprises 95 residues: Aspartyl/glutamyl-tRNA(Asn/Gln) amidotransferase subunit C (95 aa).

Belongs to the GatC family. As to quaternary structure, heterotrimer of A, B and C subunits.

The enzyme catalyses L-glutamyl-tRNA(Gln) + L-glutamine + ATP + H2O = L-glutaminyl-tRNA(Gln) + L-glutamate + ADP + phosphate + H(+). It catalyses the reaction L-aspartyl-tRNA(Asn) + L-glutamine + ATP + H2O = L-asparaginyl-tRNA(Asn) + L-glutamate + ADP + phosphate + 2 H(+). Functionally, allows the formation of correctly charged Asn-tRNA(Asn) or Gln-tRNA(Gln) through the transamidation of misacylated Asp-tRNA(Asn) or Glu-tRNA(Gln) in organisms which lack either or both of asparaginyl-tRNA or glutaminyl-tRNA synthetases. The reaction takes place in the presence of glutamine and ATP through an activated phospho-Asp-tRNA(Asn) or phospho-Glu-tRNA(Gln). In Rhodopseudomonas palustris (strain BisB5), this protein is Aspartyl/glutamyl-tRNA(Asn/Gln) amidotransferase subunit C.